The primary structure comprises 476 residues: Surface membrane glycoprotein GP46/M-2 (476 aa).

An N-terminal signal peptide occupies residues 1-32 (MAQCVRRLVLAAPLAAVVALLLCTSSAPVARA). Repeat copies occupy residues 107–130 (VMIL…PSWS), 131–154 (SMKH…PEWS), 155–178 (EMTS…TSWS), and 179–202 (SMPK…DSWR). Residues 107-202 (VMILALDFGA…FCGCVPDSWR (96 aa)) are 4 X 24 AA tandem repeats. Disordered regions lie at residues 231-255 (APGT…PSPG) and 348-370 (ALSP…RRRA). A lipid anchor (GPI-anchor amidated cysteine) is attached at Cys-452. A propeptide spans 453 to 476 (PALFDGARLRCCALVVCAGAAPAG) (removed in mature form).

The protein localises to the cell membrane. This Leishmania amazonensis protein is Surface membrane glycoprotein GP46/M-2.